The sequence spans 255 residues: 6-phosphogluconolactonase 4 (255 aa).

The protein belongs to the glucosamine/galactosamine-6-phosphate isomerase family. 6-phosphogluconolactonase subfamily.

It is found in the cytoplasm. It carries out the reaction 6-phospho-D-glucono-1,5-lactone + H2O = 6-phospho-D-gluconate + H(+). It functions in the pathway carbohydrate degradation; pentose phosphate pathway; D-ribulose 5-phosphate from D-glucose 6-phosphate (oxidative stage): step 2/3. Its function is as follows. Involved in the pentose phosphate pathway via hydrolysis of 6-phosphogluconolactone to 6-phosphogluconate. The sequence is that of 6-phosphogluconolactonase 4 from Saccharomyces cerevisiae (strain ATCC 204508 / S288c) (Baker's yeast).